A 126-amino-acid chain; its full sequence is Small ribosomal subunit protein uS13 (126 aa).

The disordered stretch occupies residues 92-126 (HRMGLPVRGQRTRTNARTRRGRRQTVAGKKKAPGK). Residues 101–126 (QRTRTNARTRRGRRQTVAGKKKAPGK) are compositionally biased toward basic residues.

This sequence belongs to the universal ribosomal protein uS13 family. In terms of assembly, part of the 30S ribosomal subunit. Forms a loose heterodimer with protein S19. Forms two bridges to the 50S subunit in the 70S ribosome.

Its function is as follows. Located at the top of the head of the 30S subunit, it contacts several helices of the 16S rRNA. In the 70S ribosome it contacts the 23S rRNA (bridge B1a) and protein L5 of the 50S subunit (bridge B1b), connecting the 2 subunits; these bridges are implicated in subunit movement. Contacts the tRNAs in the A and P-sites. The sequence is that of Small ribosomal subunit protein uS13 from Nostoc sp. (strain PCC 7120 / SAG 25.82 / UTEX 2576).